We begin with the raw amino-acid sequence, 160 residues long: MIKKRKKKSYTEVYALGQYISMSAHKARRVIDQIRGRSYEEALMILELMPYRGCYPIFKLVYSAAANASHNKGFKETNLVISKAEVNQGNTVKKLKPRARGRSYPIKRSTCHITIVLEDISFYQQYEEYLMYLKKPGCSNENRNLTCYDTYSSGGLWDKK.

This sequence belongs to the universal ribosomal protein uL22 family. In terms of assembly, part of the 50S ribosomal subunit.

It localises to the plastid. The protein localises to the chloroplast. This protein binds specifically to 23S rRNA. Its function is as follows. The globular domain of the protein is located near the polypeptide exit tunnel on the outside of the subunit, while an extended beta-hairpin is found that lines the wall of the exit tunnel in the center of the 70S ribosome. The polypeptide is Large ribosomal subunit protein uL22c (rpl22) (Arabidopsis thaliana (Mouse-ear cress)).